The following is a 361-amino-acid chain: Phospho-N-acetylmuramoyl-pentapeptide-transferase (361 aa).

The next 10 membrane-spanning stretches (helical) occupy residues 21–41, 72–92, 94–114, 135–155, 169–189, 200–220, 240–260, 263–283, 289–309, and 338–358; these read YITF…FVIG, TPTM…LLWV, LANV…LIGF, LAWT…VTPH, LLVN…VGAS, GLAI…AYLS, LAVF…FNAP, MVFM…AVSV, LVLA…MVQV, and TVVI…LSTL.

The protein belongs to the glycosyltransferase 4 family. MraY subfamily. Mg(2+) is required as a cofactor.

It localises to the cell inner membrane. It carries out the reaction UDP-N-acetyl-alpha-D-muramoyl-L-alanyl-gamma-D-glutamyl-meso-2,6-diaminopimeloyl-D-alanyl-D-alanine + di-trans,octa-cis-undecaprenyl phosphate = di-trans,octa-cis-undecaprenyl diphospho-N-acetyl-alpha-D-muramoyl-L-alanyl-D-glutamyl-meso-2,6-diaminopimeloyl-D-alanyl-D-alanine + UMP. Its pathway is cell wall biogenesis; peptidoglycan biosynthesis. Catalyzes the initial step of the lipid cycle reactions in the biosynthesis of the cell wall peptidoglycan: transfers peptidoglycan precursor phospho-MurNAc-pentapeptide from UDP-MurNAc-pentapeptide onto the lipid carrier undecaprenyl phosphate, yielding undecaprenyl-pyrophosphoryl-MurNAc-pentapeptide, known as lipid I. This is Phospho-N-acetylmuramoyl-pentapeptide-transferase from Rhodospirillum centenum (strain ATCC 51521 / SW).